Consider the following 618-residue polypeptide: MGAIETQGFKLDDSGRRIVVDPVTRIEGHMRCEVNVDANNVIRNAVSTGTMWRGLEVILKGRDPRDAWAFVERICGVCTGCHALTSVRAVEDALGIRIPKNAHLIREMMAKTLQVHDHAVHFYHLHALDWVDVVSALKADPKKTSELQHLVSPSHPLSSPGYFPRRGRTGLKKFVESGQLGPFMNGYWGSKAYVLPPEANLMAVTHYLEALDLQKEWVKVHAIFGGKNPHPNYLVGGVPCAINLDGNGAAGRINMERLNFVKARIDEMIEFNKNVYLPDVLAIGTIYKQAGWLHGGGLSALNVADYGTYDKVAYDHATHQLPGGVILDGNWDEIHAIDPRDPEQVQEFVAHSWYQYADESKGLHPWDGVTEPKFELGARTKGTRTAIEHIDESAKYSWIKSPRWRGHAVEVGPLSRYILGYAHALKGNKYCQRVKEQVDFAAEAINHAIPKALGLPETQYTLKQLLPTTIGRTLARCLEGQYCGEMMLADYHELVANIRAGDTATANVEKWDPATWPKEAKGVGTVAAPRGMLGHWIRIKDGKIENYQCVVPTTWNGSPRDAKGQIGAFEASLLGTPMVNPEQPVEILRTLHSFDPCLACSTHVMSEDGRELTTVKVR.

Residues Cys75, Cys78, Cys597, and Cys600 each coordinate Ni(2+).

This sequence belongs to the [NiFe]/[NiFeSe] hydrogenase large subunit family. Heterodimer of a large and a small subunit. It depends on Ni(2+) as a cofactor.

Its subcellular location is the cell membrane. The enzyme catalyses H2 + A = AH2. Functionally, this enzyme recycles the H(2) produced by nitrogenase to increase the production of ATP and to protect nitrogenase against inhibition or damage by O(2) under carbon- or phosphate-limited conditions. The chain is Uptake hydrogenase large subunit (hupB) from Rubrivivax gelatinosus (Rhodocyclus gelatinosus).